Consider the following 122-residue polypeptide: Holo-[acyl-carrier-protein] synthase (122 aa).

2 residues coordinate Mg(2+): D8 and E57.

This sequence belongs to the P-Pant transferase superfamily. AcpS family. It depends on Mg(2+) as a cofactor.

It is found in the cytoplasm. It catalyses the reaction apo-[ACP] + CoA = holo-[ACP] + adenosine 3',5'-bisphosphate + H(+). Functionally, transfers the 4'-phosphopantetheine moiety from coenzyme A to a Ser of acyl-carrier-protein. This Protochlamydia amoebophila (strain UWE25) protein is Holo-[acyl-carrier-protein] synthase.